Reading from the N-terminus, the 997-residue chain is Glutamate [NMDA] receptor subunit 1 (997 aa).

The N-terminal stretch at 1-26 (MAMAEFVFCRPLFGLAIVLLVAPIDA) is a signal peptide. Over 27 to 573 (AQRHTASDNP…TLVSFLQPFS (547 aa)) the chain is Extracellular. 7 N-linked (GlcNAc...) asparagine glycosylation sites follow: Asn-258, Asn-314, Asn-345, Asn-397, Asn-454, Asn-481, and Asn-501. Glycine-binding positions include 530–532 (PLT) and Arg-537. A helical membrane pass occupies residues 574 to 594 (NTLWILVMVSVHVVALVLYLL). Residues 595-651 (DRFSPFGRFKLSHSDSNEEKALNLSSAVWFAWGVLLNSGIGEGTPRSFSARVLGMVW) are Cytoplasmic-facing. Residues 652–672 (AGFAMIIVASYTANLAAFLVL) form a helical membrane-spanning segment. Residues 673–831 (ERPKTKLSGI…KTPNTLGLKN (159 aa)) are Extracellular-facing. Residue Asn-693 is glycosylated (N-linked (GlcNAc...) asparagine). Residues Ser-703 and Asp-747 each coordinate glycine. Residues 832–852 (MAGVFILVGVGIAGGVGLIII) traverse the membrane as a helical segment. Over 853–997 (EVIYKKHQVK…YTSDVSHLVV (145 aa)) the chain is Cytoplasmic. Residues 970–997 (LGKTRPQQSVLPPRYSPGYTSDVSHLVV) form a disordered region. Over residues 987-997 (GYTSDVSHLVV) the composition is skewed to polar residues.

This sequence belongs to the glutamate-gated ion channel (TC 1.A.10.1) family. As to quaternary structure, forms a heteromeric NMDA channel with Nmdar2. As to expression, highly expressed in adult heads: in the brain and ring gland. Low expression throughout the entire brain is also seen. Higher expression levels were observed in some scattered cell bodies and part of their fibers, including those from several pairs of DPM (dorsal-posterior-medial) neurons surrounding the calyx, DAL (dorsal-anterior-lateral) and DPL (dorsal-posterior-lateral) neurons in the lateral protocerebrum (LP), VAL (ventral-anterior-lateral) neurons in the anterior protocerebrum, and two pairs of VP (ventral-posterior) neurons in the posterior protocerebrum. Many cell bodies in the optic lobes show preferential expression. Punctuate expression is notably detected in many brain regions including the superior medial protocerebrum. Weakly expressed in the antennal lobes and central complex.

Its subcellular location is the cell membrane. It is found in the postsynaptic cell membrane. The protein localises to the postsynaptic density. NMDA receptor subtype of glutamate-gated ion channels with high calcium permeability and voltage-dependent sensitivity to magnesium. Mediated by glycine. This protein plays a key role in synaptic plasticity, synaptogenesis, excitotoxicity, memory acquisition and learning. It mediates neuronal functions in glutamate neurotransmission. Is involved in the cell surface targeting of NMDA receptors. Plays a role in associative learning and in long-term memory consolidation. This Drosophila melanogaster (Fruit fly) protein is Glutamate [NMDA] receptor subunit 1.